A 259-amino-acid chain; its full sequence is Phosphatidylglycerol--prolipoprotein diacylglyceryl transferase (259 aa).

4 consecutive transmembrane segments (helical) span residues 9–29, 47–67, 83–103, and 109–129; these read IGPF…VLAV, IDFI…YYVI, IWNG…VLFI, and VLNP…AQAI. Arg131 is a binding site for a 1,2-diacyl-sn-glycero-3-phospho-(1'-sn-glycerol). A run of 3 helical transmembrane segments spans residues 167–187, 194–214, and 227–247; these read MPTF…ICYL, LLEG…RFVI, and LRVS…FVIL.

Belongs to the Lgt family.

The protein resides in the cell membrane. The enzyme catalyses L-cysteinyl-[prolipoprotein] + a 1,2-diacyl-sn-glycero-3-phospho-(1'-sn-glycerol) = an S-1,2-diacyl-sn-glyceryl-L-cysteinyl-[prolipoprotein] + sn-glycerol 1-phosphate + H(+). Its pathway is protein modification; lipoprotein biosynthesis (diacylglyceryl transfer). Functionally, catalyzes the transfer of the diacylglyceryl group from phosphatidylglycerol to the sulfhydryl group of the N-terminal cysteine of a prolipoprotein, the first step in the formation of mature lipoproteins. The polypeptide is Phosphatidylglycerol--prolipoprotein diacylglyceryl transferase (Streptococcus uberis (strain ATCC BAA-854 / 0140J)).